The chain runs to 348 residues: Rhodopsin (348 aa).

M1 bears the N-acetylmethionine mark. Topologically, residues 1–36 (MNGTEGPDFYIPMSNQTGVVRSPFEYPQYYLAEPWQ) are extracellular. N-linked (GlcNAc...) asparagine glycosylation is found at N2 and N15. The helical transmembrane segment at 37–61 (FSMLAAYMFLLIVLGFPINFLTLYV) threads the bilayer. Residues 62 to 73 (TVQHKKLRTPLN) are Cytoplasmic-facing. Residues 74-96 (YILLNLAVADLFMVLGGFTTTLY) form a helical membrane-spanning segment. At 97–110 (TSLHGYFVFGPTGC) the chain is on the extracellular side. A disulfide bridge connects residues C110 and C187. A helical transmembrane segment spans residues 111–133 (NVEGFFATLGGEIALWSLVVLAI). A 'Ionic lock' involved in activated form stabilization motif is present at residues 134 to 136 (ERY). Residues 134 to 152 (ERYVVVCKPMSNFRFGENH) are Cytoplasmic-facing. A helical membrane pass occupies residues 153-173 (AIMGVAFTWIMALACAAPPLV). Residues 174-202 (GWSRYIPEGMQCSCGIDYYTLKPEVNNES) lie on the Extracellular side of the membrane. Position 201 (E201) interacts with Zn(2+). A helical transmembrane segment spans residues 203 to 224 (FVIYMFVVHFTIPLIIIFFCYG). Residues 225 to 252 (QLVFTVKEAAAQQQESATTQKAEKEVTR) are Cytoplasmic-facing. A helical membrane pass occupies residues 253–274 (MVIIMVIAFLICWVPYASVAFY). Topologically, residues 275–286 (IFTHQGSNFGPI) are extracellular. Zn(2+) is bound at residue Q279. Residues 287–308 (FMTIPAFFAKSSSIYNPVIYIM) form a helical membrane-spanning segment. K296 is modified (N6-(retinylidene)lysine). Residues 309–348 (MNKQFRNCMLTTICCGKNPLGDDEASATASKTETSQVAPA) lie on the Cytoplasmic side of the membrane. 2 S-palmitoyl cysteine lipidation sites follow: C322 and C323. The interaction with SAG stretch occupies residues 330–348 (DDEASATASKTETSQVAPA). S334 carries the phosphoserine modification. Phosphothreonine is present on T336. The residue at position 338 (S338) is a Phosphoserine. Residues T340 and T342 each carry the phosphothreonine modification. At S343 the chain carries Phosphoserine.

The protein belongs to the G-protein coupled receptor 1 family. Opsin subfamily. Homodimer. May form a complex composed of RHO, GRK1 and RCVRN in a Ca(2+)-dependent manner; RCVRN prevents the interaction between GRK1 and RHO. Interacts with GRK1. Interacts (phosphorylated form) with SAG. Interacts with GNAT1. Interacts with GNAT3. SAG and G-proteins compete for a common binding site. Interacts with PRCD; the interaction promotes PRCD stability. Forms a complex with ASAP1 and ARF4. Forms a complex with ASAP1, RAB11A, Rabin8/RAB3IP, ARF4 and RAB11FIP3; the complex regulates Golgi-to-cilia rhodopsin/RHO transport in photoreceptors. Post-translationally, phosphorylated on some or all of the serine and threonine residues present in the C-terminal region. In terms of processing, contains one covalently linked retinal chromophore. Upon light absorption, the covalently bound 11-cis-retinal is converted to all-trans-retinal. After hydrolysis of the Schiff base and release of the covalently bound all-trans-retinal, active rhodopsin is regenerated by binding of a fresh molecule of 11-cis-retinal.

The protein localises to the membrane. It is found in the cell projection. It localises to the cilium. The protein resides in the photoreceptor outer segment. Its function is as follows. Photoreceptor required for image-forming vision at low light intensity. Required for photoreceptor cell viability after birth. Light-induced isomerization of 11-cis to all-trans retinal triggers a conformational change that activates signaling via G-proteins. Subsequent receptor phosphorylation mediates displacement of the bound G-protein alpha subunit by the arrestin SAG and terminates signaling. The chain is Rhodopsin (RHO) from Oryctolagus cuniculus (Rabbit).